Consider the following 76-residue polypeptide: MSKFFRRRKFCKFTAEGIKEIDYKDLNTLRQYLTENGRIVPSRVTGTKSKYQRQLTTAVKLARFLALIPYTDNHDI.

The protein belongs to the bacterial ribosomal protein bS18 family. Part of the 30S ribosomal subunit. Forms a tight heterodimer with protein bS6.

Binds as a heterodimer with protein bS6 to the central domain of the 16S rRNA, where it helps stabilize the platform of the 30S subunit. The chain is Small ribosomal subunit protein bS18 from Xylella fastidiosa (strain M23).